The following is a 188-amino-acid chain: GMP synthase [glutamine-hydrolyzing] subunit A (188 aa).

Positions 2 to 188 constitute a Glutamine amidotransferase type-1 domain; the sequence is KVGLVYYGGQ…FKNFLGVCRK (187 aa). The active-site Nucleophile is Cys-79. Residues His-166 and Glu-168 contribute to the active site.

Heterodimer composed of a glutamine amidotransferase subunit (A) and a GMP-binding subunit (B).

It carries out the reaction XMP + L-glutamine + ATP + H2O = GMP + L-glutamate + AMP + diphosphate + 2 H(+). It participates in purine metabolism; GMP biosynthesis; GMP from XMP (L-Gln route): step 1/1. In terms of biological role, catalyzes the synthesis of GMP from XMP. The protein is GMP synthase [glutamine-hydrolyzing] subunit A of Saccharolobus solfataricus (strain ATCC 35092 / DSM 1617 / JCM 11322 / P2) (Sulfolobus solfataricus).